Here is a 527-residue protein sequence, read N- to C-terminus: N-acetylglucosamine-1-phosphodiester alpha-N-acetylglucosaminidase (527 aa).

An N-terminal signal peptide occupies residues 1-25 (MASSMGRFLLFFIALRGFLLEASGD). The propeptide at 26–49 (FGSGASRDDDVLLPYSRARARLAR) is removed in mature form. Residues 50–463 (DCTRVHAGRL…SLLTRTTWLA (414 aa)) lie on the Lumenal side of the membrane. Disulfide bonds link C116–C149, C133–C324, C308–C315, C363–C374, and C381–C390. N-linked (GlcNAc...) asparagine glycosylation is found at N209, N215, and N297. Residues 359 to 391 (DKLDCGPANCSQHGLCTETGCRCEAGWTGSNCS) enclose the EGF-like domain. N367, N389, and N421 each carry an N-linked (GlcNAc...) asparagine glycan. The helical transmembrane segment at 464–484 (ITLALAFLLLISTAANVSLFL) threads the bilayer. Residues 485-527 (GSRAARRRHLDGAYVYHPLQEVNGEHPAAEKEQLGDSSNPFKD) are Cytoplasmic-facing. Positions 498 to 505 (YVYHPLQE) are mediates the interaction with AP4M1. The short motif at 500–503 (YHPL) is the Tyrosine-based internalization motif element. Residues 523–527 (NPFKD) carry the NPF internalization motif motif.

In terms of assembly, homotetramer arranged as two disulfide-linked homodimers. Interacts with AP4M1. Post-translationally, glycosylated. Contains complex N-linked oligosaccharides with appreciable amounts of sialic acid. The precursor is cleaved and activated in the trans-Golgi network by a furin endopeptidase.

Its subcellular location is the golgi apparatus. It localises to the golgi stack membrane. The protein resides in the trans-Golgi network. The enzyme catalyses N(4)-[6-(N-acetyl-alpha-D-glucosaminyl-1-phospho)-alpha-D-mannosyl-(1-&gt;2)-alpha-D-mannosyl-(glycan)]-L-asparaginyl-[protein] + H2O = N(4)-[6-phospho-alpha-D-mannosyl-(1-&gt;2)-alpha-D-mannosyl-(glycan)]-L-asparaginyl-[protein] + N-acetyl-D-glucosamine + H(+). Its pathway is protein modification; protein glycosylation. Functionally, catalyzes the second step in the formation of the mannose 6-phosphate targeting signal on lysosomal enzyme oligosaccharides by removing GlcNAc residues from GlcNAc-alpha-P-mannose moieties, which are formed in the first step. Also hydrolyzes UDP-GlcNAc, a sugar donor for Golgi N-acetylglucosaminyltransferases. This is N-acetylglucosamine-1-phosphodiester alpha-N-acetylglucosaminidase (NAGPA) from Bos taurus (Bovine).